Reading from the N-terminus, the 358-residue chain is Uroporphyrinogen decarboxylase (358 aa).

Substrate is bound by residues Arg29–Arg33, Phe48, Asp79, Tyr155, Ser210, and His330.

The protein belongs to the uroporphyrinogen decarboxylase family. In terms of assembly, homodimer.

The protein resides in the cytoplasm. It carries out the reaction uroporphyrinogen III + 4 H(+) = coproporphyrinogen III + 4 CO2. It functions in the pathway porphyrin-containing compound metabolism; protoporphyrin-IX biosynthesis; coproporphyrinogen-III from 5-aminolevulinate: step 4/4. In terms of biological role, catalyzes the decarboxylation of four acetate groups of uroporphyrinogen-III to yield coproporphyrinogen-III. The chain is Uroporphyrinogen decarboxylase from Bordetella parapertussis (strain 12822 / ATCC BAA-587 / NCTC 13253).